The primary structure comprises 198 residues: Pyridoxal 5'-phosphate synthase subunit PdxT (198 aa).

52 to 54 (GES) is an L-glutamine binding site. Cysteine 84 functions as the Nucleophile in the catalytic mechanism. Residues arginine 116 and 143-144 (IR) each bind L-glutamine. Catalysis depends on charge relay system residues histidine 179 and glutamate 181.

Belongs to the glutaminase PdxT/SNO family. In the presence of PdxS, forms a dodecamer of heterodimers. Only shows activity in the heterodimer.

The catalysed reaction is aldehydo-D-ribose 5-phosphate + D-glyceraldehyde 3-phosphate + L-glutamine = pyridoxal 5'-phosphate + L-glutamate + phosphate + 3 H2O + H(+). The enzyme catalyses L-glutamine + H2O = L-glutamate + NH4(+). The protein operates within cofactor biosynthesis; pyridoxal 5'-phosphate biosynthesis. Its function is as follows. Catalyzes the hydrolysis of glutamine to glutamate and ammonia as part of the biosynthesis of pyridoxal 5'-phosphate. The resulting ammonia molecule is channeled to the active site of PdxS. This is Pyridoxal 5'-phosphate synthase subunit PdxT from Caldivirga maquilingensis (strain ATCC 700844 / DSM 13496 / JCM 10307 / IC-167).